The sequence spans 107 residues: MNWKEAEEKASRYLRHKGFKILARNYRTRFGEIDIIARYRGYLVFVEVKSGNSFFLPRTRVDLQKIRHIQLAANDYIMNTKDSFKGYRIDVIEVTEKGIEHFEDIQI.

Belongs to the UPF0102 family.

The sequence is that of UPF0102 protein Tlet_0667 from Pseudothermotoga lettingae (strain ATCC BAA-301 / DSM 14385 / NBRC 107922 / TMO) (Thermotoga lettingae).